A 606-amino-acid polypeptide reads, in one-letter code: MGLSISHSMKNIRNFSIIAHIDHGKSTIADRFIQICGGLSKREMAQQVLDSMDLERERGITIKAQSVSLNYCGRNGEVYHLNFIDTPGHVDFSYEVSRSLAACEGALLVVDASQGVEAQSVANCYTAIEQGLEVVPVLNKIDLPSAEPERVCQEIEEIIGLDASDALQVSAKTGQGIEELLAALVARVPPPQGDPASPLRALIIDSWFDNYLGVISLVRVVDGCLKPKDKIKIMSTGQHYRVEKAGLFTPKRREVEQLLTGGVGYIIAGIKDVDGAPVGDTVTHVEQFATKALPGFKAVKPQVFAGLFPVDSDDYEDLREALAKLRLNDAALFYEPETSQALGFGFRCGFLGMLHMEIIQERLEREYSLNLITTAPTVVYQVLTSKGEVLRIDNPSILPEPGQVAEVREPIIQADILVPQQYVGAVIGLCEEKRGTQKQLQYLGNQISLNYELPLSEVVLDFFERLKSVSRGYASLDYHFSRFQSADLVKLDLLINGERVDALSLIVHRNQAHYRGRELAEKMRELIPRQLFDVAIQAAIGAHIVARTTVKALRKNVTAKCYGGDITRKRKLLEKQKAGKKRMKQVGSVEIPQEAFLAVLKVGKKP.

Residues K10 to Q192 enclose the tr-type G domain. GTP-binding positions include D22–T27 and N139–D142.

This sequence belongs to the TRAFAC class translation factor GTPase superfamily. Classic translation factor GTPase family. LepA subfamily.

It localises to the cell inner membrane. The catalysed reaction is GTP + H2O = GDP + phosphate + H(+). Its function is as follows. Required for accurate and efficient protein synthesis under certain stress conditions. May act as a fidelity factor of the translation reaction, by catalyzing a one-codon backward translocation of tRNAs on improperly translocated ribosomes. Back-translocation proceeds from a post-translocation (POST) complex to a pre-translocation (PRE) complex, thus giving elongation factor G a second chance to translocate the tRNAs correctly. Binds to ribosomes in a GTP-dependent manner. The protein is Elongation factor 4 of Nitrosococcus oceani (strain ATCC 19707 / BCRC 17464 / JCM 30415 / NCIMB 11848 / C-107).